The chain runs to 191 residues: MKKHLLASLLGASLLLPTAVNAADYVIDTKGAHASIQFSVSHLGYSFVVGRFNEFDGKFSFDAAKVSDGKVEVNINTNSVDSNHAERDKHLRSDDFLNTAKFPAAKFVSTSVADKGNGDLWITGDLSLNGVTKPVTIKAHTVGEGQDPWGGYRAGFVGSTEFTMKDFGIKMDLGPASANVKLDLVVEGIKQ.

Positions 1–22 (MKKHLLASLLGASLLLPTAVNA) are cleaved as a signal peptide.

This sequence belongs to the UPF0312 family. Type 1 subfamily.

The protein resides in the periplasm. In Shewanella denitrificans (strain OS217 / ATCC BAA-1090 / DSM 15013), this protein is UPF0312 protein Sden_2128.